Reading from the N-terminus, the 90-residue chain is Hemoglobin subunit alpha-1 (90 aa).

Residues 1–90 (VLTDDDKNHV…SKLSDLHAEK (90 aa)) form the Globin domain.

This sequence belongs to the globin family. In terms of assembly, heterotetramer of two alpha chains and two beta chains. In terms of tissue distribution, red blood cells.

Functionally, involved in oxygen transport from the lung to the various peripheral tissues. The polypeptide is Hemoglobin subunit alpha-1 (Saara hardwickii (Indian spiny-tailed lizard)).